Consider the following 429-residue polypeptide: Histidine--tRNA ligase (429 aa).

This sequence belongs to the class-II aminoacyl-tRNA synthetase family. In terms of assembly, homodimer.

The protein localises to the cytoplasm. The enzyme catalyses tRNA(His) + L-histidine + ATP = L-histidyl-tRNA(His) + AMP + diphosphate + H(+). This is Histidine--tRNA ligase from Streptococcus pneumoniae (strain 70585).